The sequence spans 152 residues: Superoxide dismutase [Cu-Zn] (152 aa).

Residues His45, His47, and His62 each contribute to the Cu cation site. Cys56 and Cys145 are disulfide-bonded. Residues His62, His70, His79, and Asp82 each coordinate Zn(2+). Residue His119 coordinates Cu cation.

It belongs to the Cu-Zn superoxide dismutase family. Homodimer. Cu cation is required as a cofactor. Requires Zn(2+) as cofactor.

It localises to the cytoplasm. It catalyses the reaction 2 superoxide + 2 H(+) = H2O2 + O2. In terms of biological role, destroys radicals which are normally produced within the cells and which are toxic to biological systems. The chain is Superoxide dismutase [Cu-Zn] (SODCC) from Capsicum annuum (Capsicum pepper).